A 292-amino-acid polypeptide reads, in one-letter code: Bis(5'-nucleosyl)-tetraphosphatase, symmetrical (292 aa).

The segment at 271–292 (LSIEHPRHTHTPRRQAKKHSKK) is disordered. A compositionally biased stretch (basic residues) spans 277-292 (RHTHTPRRQAKKHSKK).

It belongs to the Ap4A hydrolase family.

It catalyses the reaction P(1),P(4)-bis(5'-adenosyl) tetraphosphate + H2O = 2 ADP + 2 H(+). Functionally, hydrolyzes diadenosine 5',5'''-P1,P4-tetraphosphate to yield ADP. In Xylella fastidiosa (strain 9a5c), this protein is Bis(5'-nucleosyl)-tetraphosphatase, symmetrical (apaH).